The following is a 335-amino-acid chain: Beta-hexosaminidase (335 aa).

Residues Asp-60, Arg-68, Arg-133, and 163 to 164 (KH) each bind substrate. His-176 serves as the catalytic Proton donor/acceptor. The active-site Nucleophile is the Asp-247.

Belongs to the glycosyl hydrolase 3 family. NagZ subfamily.

It is found in the cytoplasm. It catalyses the reaction Hydrolysis of terminal non-reducing N-acetyl-D-hexosamine residues in N-acetyl-beta-D-hexosaminides.. Its pathway is cell wall biogenesis; peptidoglycan recycling. Its function is as follows. Plays a role in peptidoglycan recycling by cleaving the terminal beta-1,4-linked N-acetylglucosamine (GlcNAc) from peptide-linked peptidoglycan fragments, giving rise to free GlcNAc, anhydro-N-acetylmuramic acid and anhydro-N-acetylmuramic acid-linked peptides. This Stenotrophomonas maltophilia (strain K279a) protein is Beta-hexosaminidase.